The chain runs to 343 residues: Ribosomal RNA small subunit methyltransferase C (343 aa).

Belongs to the methyltransferase superfamily. RsmC family. As to quaternary structure, monomer.

It localises to the cytoplasm. The enzyme catalyses guanosine(1207) in 16S rRNA + S-adenosyl-L-methionine = N(2)-methylguanosine(1207) in 16S rRNA + S-adenosyl-L-homocysteine + H(+). Specifically methylates the guanine in position 1207 of 16S rRNA in the 30S particle. The protein is Ribosomal RNA small subunit methyltransferase C of Shigella flexneri.